The following is a 274-amino-acid chain: Large ribosomal subunit protein uL2 (274 aa).

Disordered regions lie at residues 30–54 and 223–274; these read EKSL…IRHK and VAMN…QLKG. Residues 36 to 48 are compositionally biased toward low complexity; it reads GKKSSGGRNNNGR. Over residues 263-274 the composition is skewed to basic and acidic residues; that stretch reads KFSDKYIKQLKG.

This sequence belongs to the universal ribosomal protein uL2 family. Part of the 50S ribosomal subunit. Forms a bridge to the 30S subunit in the 70S ribosome.

In terms of biological role, one of the primary rRNA binding proteins. Required for association of the 30S and 50S subunits to form the 70S ribosome, for tRNA binding and peptide bond formation. It has been suggested to have peptidyltransferase activity; this is somewhat controversial. Makes several contacts with the 16S rRNA in the 70S ribosome. The polypeptide is Large ribosomal subunit protein uL2 (Wolbachia sp. subsp. Brugia malayi (strain TRS)).